We begin with the raw amino-acid sequence, 100 residues long: Urease subunit gamma (100 aa).

It belongs to the urease gamma subunit family. As to quaternary structure, heterotrimer of UreA (gamma), UreB (beta) and UreC (alpha) subunits. Three heterotrimers associate to form the active enzyme.

The protein resides in the cytoplasm. The enzyme catalyses urea + 2 H2O + H(+) = hydrogencarbonate + 2 NH4(+). It participates in nitrogen metabolism; urea degradation; CO(2) and NH(3) from urea (urease route): step 1/1. The sequence is that of Urease subunit gamma from Mycolicibacterium smegmatis (strain ATCC 700084 / mc(2)155) (Mycobacterium smegmatis).